The primary structure comprises 430 residues: Ribosomal protein uS12 methylthiotransferase RimO (430 aa).

Residues 2 to 119 (ISVYSISLGC…WPEMIGRALG (118 aa)) enclose the MTTase N-terminal domain. 6 residues coordinate [4Fe-4S] cluster: Cys-11, Cys-46, Cys-81, Cys-145, Cys-149, and Cys-152. The Radical SAM core domain occupies 131-361 (STGPSYAYLK…MEVQAEISEE (231 aa)). The region spanning 364–430 (EGFTGSDEDV…SRTYDLVALS (67 aa)) is the TRAM domain.

Belongs to the methylthiotransferase family. RimO subfamily. Requires [4Fe-4S] cluster as cofactor.

It localises to the cytoplasm. It carries out the reaction L-aspartate(89)-[ribosomal protein uS12]-hydrogen + (sulfur carrier)-SH + AH2 + 2 S-adenosyl-L-methionine = 3-methylsulfanyl-L-aspartate(89)-[ribosomal protein uS12]-hydrogen + (sulfur carrier)-H + 5'-deoxyadenosine + L-methionine + A + S-adenosyl-L-homocysteine + 2 H(+). Catalyzes the methylthiolation of an aspartic acid residue of ribosomal protein uS12. In Oleidesulfovibrio alaskensis (strain ATCC BAA-1058 / DSM 17464 / G20) (Desulfovibrio alaskensis), this protein is Ribosomal protein uS12 methylthiotransferase RimO.